Here is a 780-residue protein sequence, read N- to C-terminus: ATP-dependent DNA helicase RecG (780 aa).

Domain stretches follow at residues 1–350 (MLCS…GGIP), 351–549 (KKIE…EMPP), and 550–780 (GRKE…IEVG). A wedge domain region spans residues 154–252 (RKIFKLNDLL…VTPKEGEYVR (99 aa)). Residues Phe367, Leu369, Gly399, Ser400, Gly401, Lys402, Thr403, and Arg436 each contribute to the ATP site. Positions 383–544 (DMISEKPMNR…FYGDLDVTVI (162 aa)) constitute a Helicase ATP-binding domain. The DEAH box motif lies at 497–500 (DEQH). The 166-residue stretch at 563–728 (RVNEVYEFVR…EYDLKTRGPG (166 aa)) folds into the Helicase C-terminal domain.

The protein belongs to the helicase family. RecG subfamily. Monomer.

It carries out the reaction Couples ATP hydrolysis with the unwinding of duplex DNA by translocating in the 3'-5' direction.. The enzyme catalyses ATP + H2O = ADP + phosphate + H(+). Its function is as follows. Plays a critical role in recombination and DNA repair. Helps process Holliday junction intermediates to mature products by catalyzing branch migration. Has replication fork (Y-DNA) regression activity, unwinds stalled or blocked replication forks to make a HJ that can be resolved. Has a DNA unwinding activity characteristic of a DNA helicase with 3'-5' polarity. Might be a DNA translocase rather than a bona fide helicase. In Thermotoga maritima (strain ATCC 43589 / DSM 3109 / JCM 10099 / NBRC 100826 / MSB8), this protein is ATP-dependent DNA helicase RecG.